The sequence spans 309 residues: uncharacterized protein (309 aa).

Positions 1 to 32 (MTGTAPVSRRQYLGTAGAIIGTTAGCLTGADA) form a signal peptide, tat-type signal.

This sequence belongs to the bacterial solute-binding protein 1 family. WtpA subfamily. Predicted to be exported by the Tat system. The position of the signal peptide cleavage has not been experimentally proven.

This is an uncharacterized protein from Halobacterium salinarum (strain ATCC 700922 / JCM 11081 / NRC-1) (Halobacterium halobium).